Consider the following 508-residue polypeptide: Cytochrome P450 4A12 (508 aa).

Helical transmembrane passes span 10–30 and 120–140; these read IFPG…VLLL and FLAP…WFQH. Heme is bound at residue E319. The residue at position 438 (S438) is a Phosphoserine. Position 455 (C455) interacts with heme.

This sequence belongs to the cytochrome P450 family. The cofactor is heme. Expressed at proximal straight tubules and preglomerular arteries of the outer medulla as well in the cortex regions of kidney (at protein level).

It localises to the endoplasmic reticulum membrane. The protein resides in the microsome membrane. It catalyses the reaction an organic molecule + reduced [NADPH--hemoprotein reductase] + O2 = an alcohol + oxidized [NADPH--hemoprotein reductase] + H2O + H(+). It carries out the reaction dodecanoate + reduced [NADPH--hemoprotein reductase] + O2 = 12-hydroxydodecanoate + oxidized [NADPH--hemoprotein reductase] + H2O + H(+). The catalysed reaction is dodecanoate + reduced [NADPH--hemoprotein reductase] + O2 = (11R)-hydroxydodecanoate + oxidized [NADPH--hemoprotein reductase] + H2O + H(+). The enzyme catalyses (5Z,8Z,11Z,14Z)-eicosatetraenoate + reduced [NADPH--hemoprotein reductase] + O2 = 20-hydroxy-(5Z,8Z,11Z,14Z)-eicosatetraenoate + oxidized [NADPH--hemoprotein reductase] + H2O + H(+). It catalyses the reaction prostaglandin A1 + reduced [NADPH--hemoprotein reductase] + O2 = 20-hydroxy prostaglandin A1 + oxidized [NADPH--hemoprotein reductase] + H2O + H(+). Its pathway is lipid metabolism; fatty acid metabolism. Activated by cytochrome b5 and phosphatidylserine. Its function is as follows. A cytochrome P450 monooxygenase involved in the metabolism of fatty acids. Catalyzes predominantly the oxidation of the terminal carbon (omega-oxidation) of saturated and unsaturated fatty acids. May act as a major omega-hydroxylase for dodecanoic (lauric) acid in kidney. At preglomerular arteries, may participate in omega-hydroxylation of (5Z,8Z,11Z,14Z)-eicosatetraenoic acid (arachidonate) to 20-hydroxyeicosatetraenoic acid (20-HETE), a signaling molecule acting both as vasoconstrictive and natriuretic with overall effect on arterial blood pressure. Can also catalyze the oxidation of the penultimate carbon (omega-1 oxidation) of fatty acids with lower efficiency, displaying a preference for the (R)-stereoisomer. Mechanistically, uses molecular oxygen inserting one oxygen atom into a substrate, and reducing the second into a water molecule, with two electrons provided by NADPH via cytochrome P450 reductase (NADPH--hemoprotein reductase). This Rattus norvegicus (Rat) protein is Cytochrome P450 4A12 (Cyp4a12).